A 621-amino-acid polypeptide reads, in one-letter code: UvrABC system protein C (621 aa).

A GIY-YIG domain is found at 13-92 (NEPGVYLMKN…IKKYSPKYNI (80 aa)). The region spanning 204–239 (RSLLNKLKEEMQSASGNLEFEKAASLRDKMIAIENI) is the UVR domain.

Belongs to the UvrC family. In terms of assembly, interacts with UvrB in an incision complex.

It localises to the cytoplasm. The UvrABC repair system catalyzes the recognition and processing of DNA lesions. UvrC both incises the 5' and 3' sides of the lesion. The N-terminal half is responsible for the 3' incision and the C-terminal half is responsible for the 5' incision. In Clostridium beijerinckii (strain ATCC 51743 / NCIMB 8052) (Clostridium acetobutylicum), this protein is UvrABC system protein C.